Reading from the N-terminus, the 314-residue chain is Nerylneryl diphosphate synthase CPT2, chloroplastic (314 aa).

Residues 1 to 61 (MNSSIVSQHF…MSDRGLSKIS (61 aa)) constitute a chloroplast transit peptide. Aspartate 97 is an active-site residue.

The protein belongs to the UPP synthase family. Mg(2+) serves as cofactor. As to expression, expressed in stems. Expressed in petiolules. Expressed at low levels in leaf trichomes, old leaf and roots.

Its subcellular location is the plastid. It is found in the chloroplast. It carries out the reaction 3 isopentenyl diphosphate + dimethylallyl diphosphate = nerylneryl diphosphate + 3 diphosphate. The catalysed reaction is isopentenyl diphosphate + dimethylallyl diphosphate = neryl diphosphate + diphosphate. It catalyses the reaction neryl diphosphate + isopentenyl diphosphate = (2Z,6Z)-farnesyl diphosphate + diphosphate. The enzyme catalyses (2Z,6Z)-farnesyl diphosphate + isopentenyl diphosphate = nerylneryl diphosphate + diphosphate. Its function is as follows. Uses dimethylallyl diphosphate and isopentenyl diphosphate to catalyze the cis-prenyl chain elongation and produce the 20 carbon product nerylneryl diphosphate. In Solanum lycopersicum (Tomato), this protein is Nerylneryl diphosphate synthase CPT2, chloroplastic.